A 127-amino-acid chain; its full sequence is uncharacterized protein (127 aa).

Residues 5–25 (ILGITIAFIILLLTTVAILFS) form a helical membrane-spanning segment.

The protein localises to the membrane. This is an uncharacterized protein from Mycoplasma genitalium (strain ATCC 33530 / DSM 19775 / NCTC 10195 / G37) (Mycoplasmoides genitalium).